Reading from the N-terminus, the 455-residue chain is Angiopoietin-related protein 3 (455 aa).

An N-terminal signal peptide occupies residues 1 to 16 (MHTIKLFLFVVPLVIA). The interval 17-165 (SRVDPDLSSF…QEHPEVTSLK (149 aa)) is sufficient to inhibit LPL lipase activity. The tract at residues 17-207 (SRVDPDLSSF…EIEKQLRKTG (191 aa)) is sufficient to inhibit LIPG/EL phospholipase activity. Residues 32-56 (EPKSRFAMLDDVKILANGLLQLGHG) form a required for inhibition of LPL lipase activity region. A coiled-coil region spans residues 85–206 (LSLRTNEIKE…KEIEKQLRKT (122 aa)). Residue Asn-115 is glycosylated (N-linked (GlcNAc...) asparagine). The interval 202-242 (QLRKTGIQEPSENSLSSKSRAPRTTPPLQLNETENTEQDDL) is disordered. The segment covering 209–220 (QEPSENSLSSKS) has biased composition (polar residues). A glycan (O-linked (GlcNAc) threonine) is linked at Thr-226. An N-linked (GlcNAc...) asparagine glycan is attached at Asn-232. In terms of domain architecture, Fibrinogen C-terminal spans 237–455 (TEQDDLPADC…SSKMMLQPTT (219 aa)). Cys-246 and Cys-274 form a disulfide bridge. Residues Asn-296 and Asn-357 are each glycosylated (N-linked (GlcNAc...) asparagine). The cysteines at positions 394 and 408 are disulfide-linked.

In terms of assembly, interacts with ANGPTL8. Interacts with ITGB3. In part proteolytically cleaved by proprotein convertases; proposed to be involved in activation. In primary hepatocytes is intracellularily predominantly processed by FURIN and extracellularily by FURIN and PCSK6/PACE4. In 18.5 dpc embryos 75% of protein is found to be processed compared to 25 % in adults. In terms of tissue distribution, predominantly expressed in liver, weakly expressed in kidney and lung. Expressed in podocytes (at protein level). Expressed in hypothalamic neurons (at protein level). Expressed in bone marrow sinusoidal endothelial cells (at protein level).

The protein resides in the secreted. It localises to the cell projection. Its subcellular location is the lamellipodium. Functionally, acts in part as a hepatokine that is involved in regulation of lipid and glucose metabolism. Proposed to play a role in the trafficking of energy substrates to either storage or oxidative tissues in response to food intake. Has a stimulatory effect on plasma triglycerides (TG), which is achieved by suppressing plasma TG clearance via inhibition of LPL activity; the function seems to be specific for the feeding conditions. The inhibition of LPL activity appears to be an indirect mechanism involving recruitment of proprotein convertases PCSK6 and FURIN to LPL leading to cleavage and dissociation of LPL from the cell surface; the function does not require ANGPTL3 proteolytic cleavage but seems to be mediated by the N-terminal domain, and is not inhibited by GPIHBP1. Can inhibit endothelial lipase, causing increased plasma levels of high density lipoprotein (HDL) cholesterol and phospholipids; the cleaved N-terminal domain is more efficient than the uncleaved proprotein. Can bind to adipocytes to activate lipolysis, releasing free fatty acids and glycerol. Suppresses LPL specifically in oxidative tissues which is required to route very low density lipoprotein (VLDL)-TG to white adipose tissue (WAT) for storage in response to food; the function may involve cooperation with circulating, liver-derived ANGPTL8 and ANGPTL4 expression in WAT. Contributes to lower plasma levels of low density lipoprotein (LDL)-cholesterol by a mechanism that is independent of the canonical pathway implicating APOE and LDLR. May stimulate hypothalamic LPL activity. Its function is as follows. Involved in angiogenesis. Binds to endothelial cells via integrin alpha-V/beta-3 (ITGAV:ITGB3), activates FAK, MAPK and Akt signaling pathways and induces cell adhesion and cell migration. May increase the motility of podocytes. Secreted from podocytes, may modulate properties of glomerular endothelial cells involving integrin alpha-V/beta-3 and Akt signaling. May induce actin filament rearrangements in podocytes implicating integrin alpha-V/beta-3 and Rac1 activation. Binds to hematopoietic stem cells (HSC) and is involved in the regulation of HSC activity probably implicating down-regulation of IKZF1/IKAROS. This is Angiopoietin-related protein 3 (Angptl3) from Mus musculus (Mouse).